Consider the following 398-residue polypeptide: Phosphoglycerate kinase (398 aa).

Substrate is bound by residues 23–25 (DLN), R38, 61–64 (HFGR), R120, and R153. ATP-binding positions include K203, E325, and 355-358 (GGDT).

It belongs to the phosphoglycerate kinase family. As to quaternary structure, monomer.

Its subcellular location is the cytoplasm. The enzyme catalyses (2R)-3-phosphoglycerate + ATP = (2R)-3-phospho-glyceroyl phosphate + ADP. It participates in carbohydrate degradation; glycolysis; pyruvate from D-glyceraldehyde 3-phosphate: step 2/5. This chain is Phosphoglycerate kinase, found in Sphingopyxis alaskensis (strain DSM 13593 / LMG 18877 / RB2256) (Sphingomonas alaskensis).